The following is a 68-amino-acid chain: Small ribosomal subunit protein bS21 (68 aa).

Belongs to the bacterial ribosomal protein bS21 family.

The polypeptide is Small ribosomal subunit protein bS21 (Ruegeria sp. (strain TM1040) (Silicibacter sp.)).